Here is a 68-residue protein sequence, read N- to C-terminus: Protein transport protein Sec61 subunit gamma (68 aa).

Residues 1–32 are Cytoplasmic-facing; sequence MDQFQALIEPARQFSKDSYRLVKRCTKPDRKE. Residues 33-61 traverse the membrane as a helical segment; sequence YQKIAMATAIGFAIMGFIGFFVKLIHIPI. Topologically, residues 62 to 68 are extracellular; it reads NNIIVGA.

Belongs to the SecE/SEC61-gamma family. As to quaternary structure, heterotrimeric complex composed of SEC61-alpha, SEC61-beta and SEC61-gamma. In terms of tissue distribution, expressed in the germline. Expression in the germline is regulated in a sex- and meiotic cycle stage-specific manner. Expressed in somatic tissues including the intestine and somatic gonad. Expressed in the intestine more highly in hermaprodites than in males. In hermaphrodites, weakly expressed in the spermatheca.

It localises to the endoplasmic reticulum membrane. Its function is as follows. Required for oocyte development and ovulation. Required for the translocation of secretory and transmembrane proteins into the endoplasmic reticulum in vitro. The chain is Protein transport protein Sec61 subunit gamma from Caenorhabditis elegans.